The chain runs to 856 residues: Envelope glycoprotein gp160 (856 aa).

The first 22 residues, 1-22, serve as a signal peptide directing secretion; sequence MKGSKNQLLIAIVLASAYLIHC. Topologically, residues 23 to 670 are extracellular; sequence KQFVTVFYGI…FTSWVRYIQY (648 aa). The N-linked (GlcNAc...) asparagine; by host glycan is linked to N37. A disulfide bond links C44 and C57. N70, N79, N112, N116, N128, N133, N142, N182, N183, N196, N228, N231, N238, N262, N268, N279, N290, N300, N355, N390, N400, N440, and N457 each carry an N-linked (GlcNAc...) asparagine; by host glycan. Cystine bridges form between C101/C204, C108/C195, C113/C154, C217/C247, and C227/C239. The interval 113–153 is V1; the sequence is CTRNMTTWTGRTDTQNITIINDTSHARADNCTGLKEEEMID. Residues 154–195 form a V2 region; sequence CQFSMTGLERDKRKQYTEAWYSKDVVCDNNTSSQSKCYMNHC. Residues 295 to 328 are V3; the sequence is CKRPGNKTVLPITFMSGFKFHSQPVINKKPRQAW. An intrachain disulfide couples C295 to C329. Disulfide bonds link C382-C439 and C389-C412. The V4 stretch occupies residues 389–412; the sequence is CNMTWFLNWVENRTGQKQRNYAPC. The tract at residues 455-460 is V5; the sequence is QTNITF. The interval 503-523 is fusion peptide; that stretch reads GVFVLGFLGFLATAGSAMGAA. The tract at residues 566–582 is immunosuppression; sequence LQARVTAIEKYLKDQAQ. N602, N611, and N627 each carry an N-linked (GlcNAc...) asparagine; by host glycan. Residues 615 to 636 adopt a coiled-coil conformation; the sequence is QEWEQKVRYLEANISQSLEQAQ. The MPER; binding to GalCer stretch occupies residues 648 to 669; the sequence is KLNSWDVFTNWLDFTSWVRYIQ. The chain crosses the membrane as a helical span at residues 671 to 691; the sequence is GVYVVVGIVALRIVIYIVQML. Residues 692 to 856 are Cytoplasmic-facing; the sequence is SRLRKGYRPV…IRQGAELALL (165 aa). Positions 698–701 match the YXXV motif; contains endocytosis signal motif; the sequence is YRPV. C764 carries S-palmitoyl cysteine; by host lipidation. A Di-leucine internalization motif motif is present at residues 855–856; the sequence is LL.

The mature envelope protein (Env) consists of a homotrimer of non-covalently associated gp120-gp41 heterodimers. The resulting complex protrudes from the virus surface as a spike. There seems to be as few as 10 spikes on the average virion. Interacts with human CD4, CCR5 and CXCR4, to form a P4HB/PDI-CD4-CXCR4-gp120 complex. Gp120 also interacts with the C-type lectins CD209/DC-SIGN and CLEC4M/DC-SIGNR (collectively referred to as DC-SIGN(R)). Gp120 and gp41 interact with GalCer. In terms of assembly, the mature envelope protein (Env) consists of a homotrimer of non-covalently associated gp120-gp41 heterodimers. The resulting complex protrudes from the virus surface as a spike. There seems to be as few as 10 spikes on the average virion. Specific enzymatic cleavages in vivo yield mature proteins. Envelope glycoproteins are synthesized as an inactive precursor that is heavily N-glycosylated and processed likely by host cell furin in the Golgi to yield the mature SU and TM proteins. The cleavage site between SU and TM requires the minimal sequence [KR]-X-[KR]-R. Post-translationally, palmitoylation of the transmembrane protein and of Env polyprotein (prior to its proteolytic cleavage) is essential for their association with host cell membrane lipid rafts. Palmitoylation is therefore required for envelope trafficking to classical lipid rafts, but not for viral replication.

It localises to the virion membrane. Its subcellular location is the host cell membrane. The protein localises to the host endosome membrane. The surface protein gp120 (SU) attaches the virus to the host lymphoid cell by binding to the primary receptor CD4. This interaction induces a structural rearrangement creating a high affinity binding site for a chemokine coreceptor like CXCR4 and/or CCR5. This peculiar 2 stage receptor-interaction strategy allows gp120 to maintain the highly conserved coreceptor-binding site in a cryptic conformation, protected from neutralizing antibodies. Since CD4 also displays a binding site for the disulfide-isomerase P4HB/PDI, a P4HB/PDI-CD4-CXCR4-gp120 complex may form. In that complex, P4HB/PDI could reach and reduce gp120 disulfide bonds, causing major conformational changes in gp120. TXN, another PDI family member could also be involved in disulfide rearrangements in Env during fusion. These changes are transmitted to the transmembrane protein gp41 and are thought to activate its fusogenic potential by unmasking its fusion peptide. Functionally, the surface protein gp120 is a ligand for CD209/DC-SIGN and CLEC4M/DC-SIGNR, which are respectively found on dendritic cells (DCs), and on endothelial cells of liver sinusoids and lymph node sinuses. These interactions allow capture of viral particles at mucosal surfaces by these cells and subsequent transmission to permissive cells. DCs are professional antigen presenting cells, critical for host immunity by inducing specific immune responses against a broad variety of pathogens. They act as sentinels in various tissues where they take up antigen, process it, and present it to T-cells following migration to lymphoid organs. HIV subverts the migration properties of dendritic cells to gain access to CD4+ T-cells in lymph nodes. Virus transmission to permissive T-cells occurs either in trans (without DCs infection, through viral capture and transmission), or in cis (following DCs productive infection, through the usual CD4-gp120 interaction), thereby inducing a robust infection. In trans infection, bound virions remain infectious over days and it is proposed that they are not degraded, but protected in non-lysosomal acidic organelles within the DCs close to the cell membrane thus contributing to the viral infectious potential during DCs' migration from the periphery to the lymphoid tissues. On arrival at lymphoid tissues, intact virions recycle back to DCs' cell surface allowing virus transmission to CD4+ T-cells. Virion capture also seems to lead to MHC-II-restricted viral antigen presentation, and probably to the activation of HIV-specific CD4+ cells. In terms of biological role, the transmembrane protein gp41 (TM) acts as a class I viral fusion protein. Under the current model, the protein has at least 3 conformational states: pre-fusion native state, pre-hairpin intermediate state, and post-fusion hairpin state. During fusion of viral and target intracellular membranes, the coiled coil regions (heptad repeats) assume a trimer-of-hairpins structure, positioning the fusion peptide in close proximity to the C-terminal region of the ectodomain. The formation of this structure appears to drive apposition and subsequent fusion of viral and target cell membranes. Complete fusion occurs in host cell endosomes and is dynamin-dependent, however some lipid transfer might occur at the plasma membrane. The virus undergoes clathrin-dependent internalization long before endosomal fusion, thus minimizing the surface exposure of conserved viral epitopes during fusion and reducing the efficacy of inhibitors targeting these epitopes. Membranes fusion leads to delivery of the nucleocapsid into the cytoplasm. Its function is as follows. The envelope glycoprotein gp160 precursor down-modulates cell surface CD4 antigen by interacting with it in the endoplasmic reticulum and blocking its transport to the cell surface. The gp120-gp41 heterodimer seems to contribute to T-cell depletion during HIV-1 infection. The envelope glycoproteins expressed on the surface of infected cells induce apoptosis through an interaction with uninfected cells expressing the receptor (CD4) and the coreceptors CXCR4 or CCR5. This type of bystander killing may be obtained by at least three distinct mechanisms. First, the interaction between the 2 cells can induce cellular fusion followed by nuclear fusion within the syncytium. Syncytia are condemned to die from apoptosis. Second, the 2 interacting cells may not fuse entirely and simply exchange plasma membrane lipids, after a sort of hemifusion process, followed by rapid death. Third, it is possible that virus-infected cells, on the point of undergoing apoptosis, fuse with CD4-expressing cells, in which case apoptosis is rapidly transmitted from one cell to the other and thus occurs in a sort of contagious fashion. Functionally, the gp120-gp41 heterodimer allows rapid transcytosis of the virus through CD4 negative cells such as simple epithelial monolayers of the intestinal, rectal and endocervical epithelial barriers. Both gp120 and gp41 specifically recognize glycosphingolipids galactosyl-ceramide (GalCer) or 3' sulfo-galactosyl-ceramide (GalS) present in the lipid rafts structures of epithelial cells. Binding to these alternative receptors allows the rapid transcytosis of the virus through the epithelial cells. This transcytotic vesicle-mediated transport of virions from the apical side to the basolateral side of the epithelial cells does not involve infection of the cells themselves. This Human immunodeficiency virus type 2 subtype A (isolate NIH-Z) (HIV-2) protein is Envelope glycoprotein gp160 (env).